Consider the following 474-residue polypeptide: tRNA-2-methylthio-N(6)-dimethylallyladenosine synthase (474 aa).

Positions 3–120 constitute an MTTase N-terminal domain; sequence KKLHIKTWGC…LPEMIEQVRR (118 aa). [4Fe-4S] cluster contacts are provided by C12, C49, C83, C157, C161, and C164. The Radical SAM core domain occupies 143–375; that stretch reads RAEGPTAFVS…QDRITQQAMR (233 aa). A TRAM domain is found at 378 to 441; that stretch reads RHMMGTVQRI…TNSLRGVFIR (64 aa).

Belongs to the methylthiotransferase family. MiaB subfamily. As to quaternary structure, monomer. [4Fe-4S] cluster serves as cofactor.

The protein localises to the cytoplasm. The enzyme catalyses N(6)-dimethylallyladenosine(37) in tRNA + (sulfur carrier)-SH + AH2 + 2 S-adenosyl-L-methionine = 2-methylsulfanyl-N(6)-dimethylallyladenosine(37) in tRNA + (sulfur carrier)-H + 5'-deoxyadenosine + L-methionine + A + S-adenosyl-L-homocysteine + 2 H(+). Its function is as follows. Catalyzes the methylthiolation of N6-(dimethylallyl)adenosine (i(6)A), leading to the formation of 2-methylthio-N6-(dimethylallyl)adenosine (ms(2)i(6)A) at position 37 in tRNAs that read codons beginning with uridine. This is tRNA-2-methylthio-N(6)-dimethylallyladenosine synthase from Shewanella baltica (strain OS155 / ATCC BAA-1091).